The following is a 157-amino-acid chain: 2-C-methyl-D-erythritol 2,4-cyclodiphosphate synthase (157 aa).

Residues Asp8 and His10 each coordinate a divalent metal cation. Residues 8–10 and 34–35 contribute to the 4-CDP-2-C-methyl-D-erythritol 2-phosphate site; these read DVH and HS. Residue His42 participates in a divalent metal cation binding. Residues 56–58, 61–65, 100–106, 132–135, Phe139, and Arg142 each bind 4-CDP-2-C-methyl-D-erythritol 2-phosphate; these read DIG, FPDTD, AQAPKMA, and TTTE.

Belongs to the IspF family. As to quaternary structure, homotrimer. A divalent metal cation is required as a cofactor.

The catalysed reaction is 4-CDP-2-C-methyl-D-erythritol 2-phosphate = 2-C-methyl-D-erythritol 2,4-cyclic diphosphate + CMP. Its pathway is isoprenoid biosynthesis; isopentenyl diphosphate biosynthesis via DXP pathway; isopentenyl diphosphate from 1-deoxy-D-xylulose 5-phosphate: step 4/6. Its function is as follows. Involved in the biosynthesis of isopentenyl diphosphate (IPP) and dimethylallyl diphosphate (DMAPP), two major building blocks of isoprenoid compounds. Catalyzes the conversion of 4-diphosphocytidyl-2-C-methyl-D-erythritol 2-phosphate (CDP-ME2P) to 2-C-methyl-D-erythritol 2,4-cyclodiphosphate (ME-CPP) with a corresponding release of cytidine 5-monophosphate (CMP). The polypeptide is 2-C-methyl-D-erythritol 2,4-cyclodiphosphate synthase (Stutzerimonas stutzeri (strain A1501) (Pseudomonas stutzeri)).